Here is a 292-residue protein sequence, read N- to C-terminus: Non-homologous end joining protein Ku (292 aa).

Residues 12 to 196 form the Ku domain; the sequence is KLSLVTCPVV…KITKDMVELA (185 aa). A disordered region spans residues 231-292; sequence KPIKLPEPEE…RSAARQRKAG (62 aa). Over residues 271–292 the composition is skewed to basic residues; it reads APAHRRPAKKAHRSAARQRKAG.

It belongs to the prokaryotic Ku family. As to quaternary structure, homodimer. Interacts with LigD.

Functionally, with LigD forms a non-homologous end joining (NHEJ) DNA repair enzyme, which repairs dsDNA breaks with reduced fidelity. Binds linear dsDNA with 5'- and 3'- overhangs but not closed circular dsDNA nor ssDNA. Recruits and stimulates the ligase activity of LigD. This is Non-homologous end joining protein Ku from Bradyrhizobium sp. (strain ORS 278).